A 305-amino-acid chain; its full sequence is Nitrogen assimilation regulatory protein nac (305 aa).

The HTH lysR-type domain maps to 1 to 58 (MNLRRLKYFVKIVDIGSLTQAAEVLHIAQPALSQQVATLEGEMDQQLLIRTKRGVTPT). The H-T-H motif DNA-binding region spans 18–37 (LTQAAEVLHIAQPALSQQVA).

This sequence belongs to the LysR transcriptional regulatory family.

Functionally, transcriptional activator for the hut, put and ure operons and repressor for the gdh and gltB operons in response to nitrogen limitation. Negative regulator of its own expression. The chain is Nitrogen assimilation regulatory protein nac (nac) from Klebsiella aerogenes (Enterobacter aerogenes).